We begin with the raw amino-acid sequence, 706 residues long: Translation initiation factor IF-2 (706 aa).

The segment at 55 to 117 (KEVNSDSNQE…PTMKDEKGLI (63 aa)) is disordered. Residues 67–81 (VNTDDKLDKIDKPNK) are compositionally biased toward basic and acidic residues. The span at 93 to 108 (KNKKSKKKQKNKKKGP) shows a compositional bias: basic residues. The tr-type G domain occupies 208-375 (SRPPVVTVMG…MILLVSEVEE (168 aa)). Positions 217–224 (GHVDHGKT) are G1. 217–224 (GHVDHGKT) provides a ligand contact to GTP. The interval 242 to 246 (GITQH) is G2. The G3 stretch occupies residues 263–266 (DTPG). GTP is bound by residues 263–267 (DTPGH) and 317–320 (NKID). Residues 317–320 (NKID) are G4. The tract at residues 353-355 (SAI) is G5.

Belongs to the TRAFAC class translation factor GTPase superfamily. Classic translation factor GTPase family. IF-2 subfamily.

The protein resides in the cytoplasm. In terms of biological role, one of the essential components for the initiation of protein synthesis. Protects formylmethionyl-tRNA from spontaneous hydrolysis and promotes its binding to the 30S ribosomal subunits. Also involved in the hydrolysis of GTP during the formation of the 70S ribosomal complex. The polypeptide is Translation initiation factor IF-2 (Alkaliphilus metalliredigens (strain QYMF)).